A 600-amino-acid chain; its full sequence is MKNQLRSSFSTQGRRMAGARALWVANGMKKEMMGKPIIAIVNSFTQFVPGHTHLHEIGQQVKAEIEKLGCFAAEFNTIAIDDGIAMGHDGMLYSLPSRDIIADSVEYMVNAHKADAMVCISNCDKITPGMLMAAMRLNIPTVFVSGGPMEAGEWNNQHLDLIDAMIKSADASVSDEDVAQIEDNACPGCGCCSGMFTANSMNCLNEAIGLGLPGNGTILATHANRTQLFKDAAALIVKNAYKYYEEGDDSVLPRSIATRDAFLNAMTLDIAMGGSTNTVLHLLAIAHEAEVDFKMDDIDMLSRHVPCLCKVAPNTQKYHIQDVNRAGGILNILGELSKGGLLKTDVKRVDGLTLAEAVEKYNICKKEVDTEAKRIYSSAPGNKFNIKLGSQNAVYKELDTDRANGCIRDLQHAYSKDGGLAVLKGNIAQDGCVVKTAGVDESIWKFSGPAKVFDSQDAACEGILGGKVVSGDVVVITHEGPKGGPGMQEMLYPTSYIKSKHLGKECALITDGRFSGGTSGLSIGHISPEAAAGGNIGKIVDGDIIEIDIPNRSINVKLSDEELAARPMAPVTRDRKVPKSLKAYASMVSSADKGGVRIID.

Position 82 (Asp82) interacts with Mg(2+). Cys123 provides a ligand contact to [2Fe-2S] cluster. Mg(2+)-binding residues include Asp124 and Lys125. Lys125 is modified (N6-carboxylysine). Residue Cys192 coordinates [2Fe-2S] cluster. Glu489 serves as a coordination point for Mg(2+). The active-site Proton acceptor is the Ser515.

The protein belongs to the IlvD/Edd family. As to quaternary structure, homodimer. [2Fe-2S] cluster serves as cofactor. The cofactor is Mg(2+).

It catalyses the reaction (2R)-2,3-dihydroxy-3-methylbutanoate = 3-methyl-2-oxobutanoate + H2O. The catalysed reaction is (2R,3R)-2,3-dihydroxy-3-methylpentanoate = (S)-3-methyl-2-oxopentanoate + H2O. It participates in amino-acid biosynthesis; L-isoleucine biosynthesis; L-isoleucine from 2-oxobutanoate: step 3/4. It functions in the pathway amino-acid biosynthesis; L-valine biosynthesis; L-valine from pyruvate: step 3/4. In terms of biological role, functions in the biosynthesis of branched-chain amino acids. Catalyzes the dehydration of (2R,3R)-2,3-dihydroxy-3-methylpentanoate (2,3-dihydroxy-3-methylvalerate) into 2-oxo-3-methylpentanoate (2-oxo-3-methylvalerate) and of (2R)-2,3-dihydroxy-3-methylbutanoate (2,3-dihydroxyisovalerate) into 2-oxo-3-methylbutanoate (2-oxoisovalerate), the penultimate precursor to L-isoleucine and L-valine, respectively. The sequence is that of Dihydroxy-acid dehydratase from Phocaeicola vulgatus (strain ATCC 8482 / DSM 1447 / JCM 5826 / CCUG 4940 / NBRC 14291 / NCTC 11154) (Bacteroides vulgatus).